We begin with the raw amino-acid sequence, 396 residues long: 2-(3-amino-3-carboxypropyl)histidine synthase subunit 1 (396 aa).

[4Fe-4S] cluster-binding residues include Cys89, Cys194, and Cys323. Residues Thr372–Ser396 form a disordered region.

The protein belongs to the DPH1/DPH2 family. DPH1 subfamily. Component of the 2-(3-amino-3-carboxypropyl)histidine synthase complex composed of dph-1, dph-2, dph-3 and a NADH-dependent reductase. It depends on [4Fe-4S] cluster as a cofactor.

The catalysed reaction is L-histidyl-[translation elongation factor 2] + S-adenosyl-L-methionine = 2-[(3S)-amino-3-carboxypropyl]-L-histidyl-[translation elongation factor 2] + S-methyl-5'-thioadenosine + H(+). It functions in the pathway protein modification; peptidyl-diphthamide biosynthesis. Catalyzes the first step of diphthamide biosynthesis, a post-translational modification of histidine which occurs in elongation factor 2. Dph-1 and dph-2 transfer a 3-amino-3-carboxypropyl (ACP) group from S-adenosyl-L-methionine (SAM) to a histidine residue, the reaction is assisted by a reduction system comprising dph-3 and a NADH-dependent reductase. In Caenorhabditis elegans, this protein is 2-(3-amino-3-carboxypropyl)histidine synthase subunit 1 (dph-1).